Consider the following 284-residue polypeptide: Cell division protein DivIB (284 aa).

The segment covering 1-10 has biased composition (basic and acidic residues); the sequence is MAWLRKKEQQ. Positions 1–38 are disordered; it reads MAWLRKKEQQSDPLTPWQQYQARQQQTPRHDRRQKPKL. The Cytoplasmic portion of the chain corresponds to 1-56; it reads MAWLRKKEQQSDPLTPWQQYQARQQQTPRHDRRQKPKLDVNLPKIQTLRRRKLVKN. A helical transmembrane segment spans residues 57–77; the sequence is LVLILLPLLLLLGVFGYFASP. At 78-284 the chain is on the extracellular side; that stretch reads LSKVGLVSVQ…YSSSEKSSND (207 aa). Positions 79 to 150 constitute a POTRA domain; sequence SKVGLVSVQG…NRIIIKTSEY (72 aa).

The protein belongs to the FtsQ/DivIB family. DivIB subfamily.

Its subcellular location is the cell membrane. Cell division protein that may be involved in stabilizing or promoting the assembly of the division complex. In Lacticaseibacillus rhamnosus (strain ATCC 53103 / LMG 18243 / GG) (Lactobacillus rhamnosus), this protein is Cell division protein DivIB.